An 88-amino-acid chain; its full sequence is Small ribosomal subunit protein bS20 (88 aa).

Positions methionine 1 to serine 22 are enriched in basic residues. The interval methionine 1–serine 26 is disordered.

This sequence belongs to the bacterial ribosomal protein bS20 family.

Its function is as follows. Binds directly to 16S ribosomal RNA. The sequence is that of Small ribosomal subunit protein bS20 from Wigglesworthia glossinidia brevipalpis.